The following is a 1451-amino-acid chain: DNA excision repair protein ERCC-6-like (1451 aa).

Residues 27 to 60 (YDRYRQKGKEAALNGELPRALELFQLAYQLQPSE) form a TPR 1 repeat. Positions 118–286 (SLYRDGRKGG…WALFDFACQG (169 aa)) constitute a Helicase ATP-binding domain. 131–138 (DDMGLGKT) is a binding site for ATP. The DEAH box motif lies at 237–240 (DEAH). The Helicase C-terminal domain maps to 479-639 (FVVSLMECLR…PFRYFSKQEL (161 aa)). 7 disordered regions span residues 647–669 (DTRS…RSDT), 778–804 (NSFD…ETAS), 935–1006 (DDTS…ATTD), 1035–1054 (DEEV…EFQL), 1063–1083 (LEEP…NYND), 1096–1140 (RSTP…LTSS), and 1182–1343 (LLEN…SAEL). A compositionally biased stretch (acidic residues) spans 781-804 (DEPEFEEDEQNLPSAEDAEMETAS). Polar residues-rich tracts occupy residues 944 to 964 (SDFN…SPSL) and 992 to 1002 (QVLSSPLSQHE). Residue Ser-961 is modified to Phosphoserine. The segment covering 1035–1050 (DEEVHEVEESAAEESP) has biased composition (acidic residues). Basic and acidic residues predominate over residues 1063-1074 (LEEPSINHDKQN). Over residues 1121 to 1132 (DTEEEEEEEEES) the composition is skewed to acidic residues. Over residues 1213–1230 (VQTSSGDNSKSYETSEAN) the composition is skewed to polar residues. Over residues 1244-1278 (YREGKNTSDKVSESNETHSEEFAEEEKPSGDKSES) the composition is skewed to basic and acidic residues. The segment covering 1310–1341 (SEADESVVEEEEPSGETLNTEESEMGEEEESA) has biased composition (acidic residues). The stretch at 1402-1435 (YNLLVLSGKQSLAEGRKQEALDFFLKAIDINTGD) is one TPR 2 repeat.

This sequence belongs to the SNF2/RAD54 helicase family.

Its subcellular location is the chromosome. The protein localises to the centromere. It is found in the kinetochore. The enzyme catalyses ATP + H2O = ADP + phosphate + H(+). Its function is as follows. DNA helicase that acts as a tension sensor that associates with catenated DNA which is stretched under tension until it is resolved during anaphase. Functions as ATP-dependent DNA translocase. Can promote Holliday junction branch migration (in vitro). The chain is DNA excision repair protein ERCC-6-like (ercc6l) from Danio rerio (Zebrafish).